A 331-amino-acid chain; its full sequence is Phospholipase A2 inhibitor (331 aa).

The N-terminal stretch at 1-23 (MKSSVPSLLIACLVMSLNSYTQQ) is a signal peptide. A glycan (N-linked (GlcNAc...) asparagine) is linked at Asn35. 8 LRR repeats span residues 78–101 (LPNL…LFRN), 103–125 (PQLH…IFTN), 127–149 (SSLI…WFQT), 150–173 (LGEL…CFDK), 175–197 (KKLT…MFSG), 199–221 (DNLE…TFHW), 223–244 (PKLT…FFQP), and 245–268 (LEQL…VYKT). A glycan (N-linked (GlcNAc...) asparagine) is linked at Asn125. Asn232 is a glycosylation site (N-linked (GlcNAc...) asparagine). Asn271 carries N-linked (GlcNAc...) asparagine glycosylation. Positions 279-330 (NPWACDCRLDNLLTWVNEHNIHLYSKEEIVCASPKHFKGECATSLHKSQICP) constitute an LRRCT domain.

As to quaternary structure, homotrimer.

The protein localises to the secreted. Inhibits the enzymatic activity of the basic phospholipase A2 (PLA2). In Gloydius brevicaudus siniticus (Chinese mamushi), this protein is Phospholipase A2 inhibitor.